Consider the following 768-residue polypeptide: Phosphoribosylformylglycinamidine synthase subunit PurL (768 aa).

Histidine 48 is an active-site residue. ATP is bound by residues tyrosine 51 and lysine 90. Residue glutamate 92 coordinates Mg(2+). Substrate-binding positions include 93-96 (SHNH) and arginine 115. Catalysis depends on histidine 94, which acts as the Proton acceptor. Aspartate 116 is a binding site for Mg(2+). Position 239 (glutamine 239) interacts with substrate. Residue aspartate 267 coordinates Mg(2+). A substrate-binding site is contributed by 311–313 (ESQ). The ATP site is built by aspartate 507 and glycine 544. Residue asparagine 545 participates in Mg(2+) binding. Serine 547 contacts substrate.

Belongs to the FGAMS family. As to quaternary structure, monomer. Part of the FGAM synthase complex composed of 1 PurL, 1 PurQ and 2 PurS subunits.

It localises to the cytoplasm. It carries out the reaction N(2)-formyl-N(1)-(5-phospho-beta-D-ribosyl)glycinamide + L-glutamine + ATP + H2O = 2-formamido-N(1)-(5-O-phospho-beta-D-ribosyl)acetamidine + L-glutamate + ADP + phosphate + H(+). It functions in the pathway purine metabolism; IMP biosynthesis via de novo pathway; 5-amino-1-(5-phospho-D-ribosyl)imidazole from N(2)-formyl-N(1)-(5-phospho-D-ribosyl)glycinamide: step 1/2. Part of the phosphoribosylformylglycinamidine synthase complex involved in the purines biosynthetic pathway. Catalyzes the ATP-dependent conversion of formylglycinamide ribonucleotide (FGAR) and glutamine to yield formylglycinamidine ribonucleotide (FGAM) and glutamate. The FGAM synthase complex is composed of three subunits. PurQ produces an ammonia molecule by converting glutamine to glutamate. PurL transfers the ammonia molecule to FGAR to form FGAM in an ATP-dependent manner. PurS interacts with PurQ and PurL and is thought to assist in the transfer of the ammonia molecule from PurQ to PurL. In Parasynechococcus marenigrum (strain WH8102), this protein is Phosphoribosylformylglycinamidine synthase subunit PurL.